We begin with the raw amino-acid sequence, 560 residues long: Membrane protein insertase YidC (560 aa).

Residues 1–21 (MDIKRTILIAALAVVSYVMVL) traverse the membrane as a helical segment. The segment at 42-66 (VAPGLPDGVPAGNNGASADVPSANA) is disordered. The next 5 membrane-spanning stretches (helical) occupy residues 341-361 (LELT…FWLL), 367-387 (LLGN…GLFF), 437-457 (LGGC…YWVL), 468-488 (WILW…PIIM), and 515-535 (PIIF…YWVV).

Belongs to the OXA1/ALB3/YidC family. Type 1 subfamily. As to quaternary structure, interacts with the Sec translocase complex via SecD. Specifically interacts with transmembrane segments of nascent integral membrane proteins during membrane integration.

It is found in the cell inner membrane. In terms of biological role, required for the insertion and/or proper folding and/or complex formation of integral membrane proteins into the membrane. Involved in integration of membrane proteins that insert both dependently and independently of the Sec translocase complex, as well as at least some lipoproteins. Aids folding of multispanning membrane proteins. In Pseudomonas putida (strain ATCC 700007 / DSM 6899 / JCM 31910 / BCRC 17059 / LMG 24140 / F1), this protein is Membrane protein insertase YidC.